The following is a 100-amino-acid chain: Small ribosomal subunit protein uS14c (100 aa).

It belongs to the universal ribosomal protein uS14 family. Part of the 30S ribosomal subunit.

Its subcellular location is the plastid. The protein localises to the chloroplast. Functionally, binds 16S rRNA, required for the assembly of 30S particles. This is Small ribosomal subunit protein uS14c from Phalaenopsis aphrodite subsp. formosana (Moth orchid).